The sequence spans 283 residues: Elongation factor Ts (283 aa).

Residues 80–83 (TDFV) are involved in Mg(2+) ion dislocation from EF-Tu.

Belongs to the EF-Ts family.

The protein localises to the cytoplasm. Its function is as follows. Associates with the EF-Tu.GDP complex and induces the exchange of GDP to GTP. It remains bound to the aminoacyl-tRNA.EF-Tu.GTP complex up to the GTP hydrolysis stage on the ribosome. The sequence is that of Elongation factor Ts from Erwinia tasmaniensis (strain DSM 17950 / CFBP 7177 / CIP 109463 / NCPPB 4357 / Et1/99).